The following is a 1086-amino-acid chain: 1,2-beta-oligoglucan phosphorylase (1086 aa).

Catalysis depends on Asp-741, which acts as the Proton donor.

The protein belongs to the glycosyl hydrolase 94 family. In terms of assembly, monomer.

It catalyses the reaction [(1-&gt;2)-beta-D-glucosyl](n) + phosphate = [(1-&gt;2)-beta-D-glucosyl](n-1) + alpha-D-glucose 1-phosphate. In terms of biological role, catalyzes the reversible phosphorolysis of beta-(1-&gt;2)-D-glucans. The minimum length of the substrate for the phosphorolytic reaction is 3 D-glucose units. In Listeria innocua serovar 6a (strain ATCC BAA-680 / CLIP 11262), this protein is 1,2-beta-oligoglucan phosphorylase.